A 391-amino-acid chain; its full sequence is Arginine biosynthesis bifunctional protein ArgJ (391 aa).

6 residues coordinate substrate: Thr-149, Lys-172, Thr-183, Glu-263, Asn-386, and Ser-391. Thr-183 functions as the Nucleophile in the catalytic mechanism.

This sequence belongs to the ArgJ family. In terms of assembly, heterotetramer of two alpha and two beta chains.

The protein localises to the cytoplasm. The catalysed reaction is N(2)-acetyl-L-ornithine + L-glutamate = N-acetyl-L-glutamate + L-ornithine. It catalyses the reaction L-glutamate + acetyl-CoA = N-acetyl-L-glutamate + CoA + H(+). The protein operates within amino-acid biosynthesis; L-arginine biosynthesis; L-ornithine and N-acetyl-L-glutamate from L-glutamate and N(2)-acetyl-L-ornithine (cyclic): step 1/1. It functions in the pathway amino-acid biosynthesis; L-arginine biosynthesis; N(2)-acetyl-L-ornithine from L-glutamate: step 1/4. Its function is as follows. Catalyzes two activities which are involved in the cyclic version of arginine biosynthesis: the synthesis of N-acetylglutamate from glutamate and acetyl-CoA as the acetyl donor, and of ornithine by transacetylation between N(2)-acetylornithine and glutamate. This is Arginine biosynthesis bifunctional protein ArgJ from Bifidobacterium longum (strain NCC 2705).